We begin with the raw amino-acid sequence, 709 residues long: Cilia- and flagella-associated protein 91 (709 aa).

Disordered regions lie at residues 94 to 116, 333 to 360, and 690 to 709; these read RAGAAPPHPVKAKSVKLPPQRTK, VEPQLCTNNGGGSASASPRRDRSRKPLR, and PAAAAAGFRQRSPNEKETKE.

It belongs to the CFAP91 family.

The protein localises to the cytoplasm. It is found in the cytoskeleton. The protein resides in the flagellum axoneme. Axoneme-associated protein involved in flagellum motility and central pair positioning. The chain is Cilia- and flagella-associated protein 91 (CFAP91) from Trypanosoma brucei brucei (strain 927/4 GUTat10.1).